The following is a 427-amino-acid chain: Protein TIFY 6a (427 aa).

A compositionally biased stretch (basic and acidic residues) spans 1-25 (MERDFLGAIGRKEEAAGKPEEHSDY). Positions 1–33 (MERDFLGAIGRKEEAAGKPEEHSDYRGGGGGAS) are disordered. The 36-residue stretch at 196–231 (QNPKVTQMTIFYDGLVNVFDNIPVEKAQELMLLASR) folds into the Tify domain. 2 stretches are compositionally biased toward polar residues: residues 293–303 (LPKSSSSSNDS) and 317–327 (PLSQASPSQPI). Residues 293–327 (LPKSSSSSNDSAGPKSGGLPLAVTPLSQASPSQPI) are disordered. The Jas motif lies at 343-367 (PQARKASLARFLEKRKERVSSVAPY). The Nuclear localization signal motif lies at 345–352 (ARKASLAR). The interval 360 to 427 (RVSSVAPYPS…QEPPSTKLQI (68 aa)) is disordered. 2 stretches are compositionally biased toward polar residues: residues 369 to 402 (SSKS…NNCE) and 411 to 427 (RNIS…KLQI).

Belongs to the TIFY/JAZ family. Ubiquitinated.

Its subcellular location is the nucleus. Its function is as follows. Repressor of jasmonate responses. The sequence is that of Protein TIFY 6a from Oryza sativa subsp. indica (Rice).